The chain runs to 274 residues: GPN-loop GTPase 3 (274 aa).

13–18 (GVGKST) provides a ligand contact to GTP. The short motif at 70-72 (GPN) is the Gly-Pro-Asn (GPN)-loop; involved in dimer interface element. 173–176 (SKID) serves as a coordination point for GTP. Residues 255 to 274 (SESQEPKEPVEEIEEEVDFE) are disordered. Over residues 265-274 (EEIEEEVDFE) the composition is skewed to acidic residues.

This sequence belongs to the GPN-loop GTPase family. Heterodimers with GPN1 or GPN2. Binds to RNA polymerase II (RNAPII).

In terms of biological role, small GTPase required for proper nuclear import of RNA polymerase II and III (RNAPII and RNAPIII). May act at an RNAP assembly step prior to nuclear import. The polypeptide is GPN-loop GTPase 3 (Debaryomyces hansenii (strain ATCC 36239 / CBS 767 / BCRC 21394 / JCM 1990 / NBRC 0083 / IGC 2968) (Yeast)).